The following is a 659-amino-acid chain: Cysteine-rich receptor-like protein kinase 7 (659 aa).

A signal peptide spans 1-23 (MSSLFPFIFLFLFSFLTSFRASA). At 24 to 273 (QDPRFLAYYC…SLSDKSGNSN (250 aa)) the chain is on the extracellular side. 2 Gnk2-homologous domains span residues 27-131 (RFLA…HKNI) and 142-244 (FILR…LYDF). 5 N-linked (GlcNAc...) asparagine glycosylation sites follow: Asn-35, Asn-42, Asn-60, Asn-69, and Asn-103. An N-linked (GlcNAc...) asparagine glycan is attached at Asn-246. Residues 274-294 (VVVVAVVVPIIVAVLIFIAGY) form a helical membrane-spanning segment. The Cytoplasmic portion of the chain corresponds to 295 to 659 (CFFAKRAKKT…DKSMSDLDPR (365 aa)). Residues 336–622 (FSENNKIGRG…ALPAPQQPGF (287 aa)) form the Protein kinase domain. ATP is bound by residues 342-350 (IGRGGFGDV) and Lys-364. Position 409 is a phosphotyrosine (Tyr-409). The Proton acceptor role is filled by Asp-461. Ser-465 carries the post-translational modification Phosphoserine. The residue at position 501 (Thr-501) is a Phosphothreonine. The residue at position 509 (Tyr-509) is a Phosphotyrosine. The disordered stretch occupies residues 626–659 (SRPGTNRLDSDQSTTNKSVTVSIDDKSMSDLDPR). The segment covering 636–646 (DQSTTNKSVTV) has biased composition (polar residues). Over residues 648–659 (IDDKSMSDLDPR) the composition is skewed to basic and acidic residues.

Belongs to the protein kinase superfamily. Ser/Thr protein kinase family. CRK subfamily.

It localises to the membrane. It carries out the reaction L-seryl-[protein] + ATP = O-phospho-L-seryl-[protein] + ADP + H(+). The enzyme catalyses L-threonyl-[protein] + ATP = O-phospho-L-threonyl-[protein] + ADP + H(+). The polypeptide is Cysteine-rich receptor-like protein kinase 7 (CRK7) (Arabidopsis thaliana (Mouse-ear cress)).